The chain runs to 203 residues: Outer-membrane lipoprotein LolB (203 aa).

The first 17 residues, 1 to 17 (MNRLFRLLPLASLVLTA), serve as a signal peptide directing secretion. The N-palmitoyl cysteine moiety is linked to residue C18. The S-diacylglycerol cysteine moiety is linked to residue C18.

This sequence belongs to the LolB family. Monomer.

The protein localises to the cell outer membrane. Its function is as follows. Plays a critical role in the incorporation of lipoproteins in the outer membrane after they are released by the LolA protein. The protein is Outer-membrane lipoprotein LolB of Klebsiella pneumoniae (strain 342).